The following is an 868-amino-acid chain: Leucine--tRNA ligase (868 aa).

The 'HIGH' region signature appears at Pro42–His52. Residues Lys627–Ser631 carry the 'KMSKS' region motif. Lys630 is a binding site for ATP.

This sequence belongs to the class-I aminoacyl-tRNA synthetase family.

The protein resides in the cytoplasm. The catalysed reaction is tRNA(Leu) + L-leucine + ATP = L-leucyl-tRNA(Leu) + AMP + diphosphate. The protein is Leucine--tRNA ligase of Pseudomonas fluorescens (strain ATCC BAA-477 / NRRL B-23932 / Pf-5).